The sequence spans 133 residues: MRHYEIVFMVHPDQSEQVPGMIERYTTILKQDGGQVHRLEDWGRRQLAYPIEKLHKAHYVLINAEATAEAVDELENAFRFNDVILRNMVMRTKTAVTEPSPMMKEEPRRERRDDSAPRQERAEKKTETTEDNA.

The segment at 93-133 (KTAVTEPSPMMKEEPRRERRDDSAPRQERAEKKTETTEDNA) is disordered. Positions 103 to 133 (MKEEPRRERRDDSAPRQERAEKKTETTEDNA) are enriched in basic and acidic residues.

It belongs to the bacterial ribosomal protein bS6 family.

Binds together with bS18 to 16S ribosomal RNA. The sequence is that of Small ribosomal subunit protein bS6 from Alteromonas mediterranea (strain DSM 17117 / CIP 110805 / LMG 28347 / Deep ecotype).